Here is a 179-residue protein sequence, read N- to C-terminus: Large ribosomal subunit protein uL6 (179 aa).

Belongs to the universal ribosomal protein uL6 family. In terms of assembly, part of the 50S ribosomal subunit.

In terms of biological role, this protein binds to the 23S rRNA, and is important in its secondary structure. It is located near the subunit interface in the base of the L7/L12 stalk, and near the tRNA binding site of the peptidyltransferase center. The sequence is that of Large ribosomal subunit protein uL6 from Persephonella marina (strain DSM 14350 / EX-H1).